Reading from the N-terminus, the 68-residue chain is Neuronal regeneration-related protein (68 aa).

Positions 21–54 (MEGRLPKGRLPVPKEVNRKKNDETNAASLTPLGS) are disordered. Positions 44-54 (TNAASLTPLGS) are enriched in polar residues.

As to quaternary structure, interacts with the latency-associated peptides (LAP) of TGFB1 and TGFB2; the interaction results in a decrease in TGFB autoinduction. Interacts with FLNA. Phosphorylated on Ser-59. Phosphorylation decreases stability and activity.

It localises to the cytoplasm. May have roles in neural function and cellular differentiation. Ectopic expression promotes axonal regeneration, induces differentiation of fibroblast into myofibroblast, induces myofibroblast ameboid migration, augments motility of gliomas, and increases retinoic-acid regulation of lipid-droplet biogenesis. Down-regulates the expression of TGFB1 and TGFB2 but not of TGFB3. May play a role in the regulation of alveolar generation. The sequence is that of Neuronal regeneration-related protein (NREP) from Pongo abelii (Sumatran orangutan).